The chain runs to 285 residues: Bifunctional protein FolD (285 aa).

Residues 165–167 (GRS) and serine 190 each bind NADP(+).

The protein belongs to the tetrahydrofolate dehydrogenase/cyclohydrolase family. Homodimer.

It catalyses the reaction (6R)-5,10-methylene-5,6,7,8-tetrahydrofolate + NADP(+) = (6R)-5,10-methenyltetrahydrofolate + NADPH. The catalysed reaction is (6R)-5,10-methenyltetrahydrofolate + H2O = (6R)-10-formyltetrahydrofolate + H(+). Its pathway is one-carbon metabolism; tetrahydrofolate interconversion. Functionally, catalyzes the oxidation of 5,10-methylenetetrahydrofolate to 5,10-methenyltetrahydrofolate and then the hydrolysis of 5,10-methenyltetrahydrofolate to 10-formyltetrahydrofolate. In Burkholderia pseudomallei (strain 1710b), this protein is Bifunctional protein FolD.